The following is a 101-amino-acid chain: Thylakoid-associated protein slr0729 (101 aa).

It is found in the cellular thylakoid membrane. The chain is Thylakoid-associated protein slr0729 from Synechocystis sp. (strain ATCC 27184 / PCC 6803 / Kazusa).